The primary structure comprises 106 residues: UPF0145 protein AZOSEA16190 (106 aa).

This sequence belongs to the UPF0145 family.

The sequence is that of UPF0145 protein AZOSEA16190 from Aromatoleum aromaticum (strain DSM 19018 / LMG 30748 / EbN1) (Azoarcus sp. (strain EbN1)).